We begin with the raw amino-acid sequence, 594 residues long: MADLLSSLKNLSSSSGVYQYFDKNRQLLYIGKAKNLKKRIKSYFSVRNNEITPNPRTSLRVQMMVKQIAFLETILVENEQDALILENSLIKQLKPKYNILLRDDKTYPYIYMDFSIDFPIPLITRKILKQPGVKYFGPFTSGAKDILDSLYELLPLVQKKNCIKDKKACMFYQIERCKAPCEDKITKEEYLKIAKECLEMIENKDRLIKELELKMERLSSNLRFEEALIYRDRIAKIQKIAPFTCMDLAKLYDLDIFAFYGGNNKAVLVKMFMRGGKIISSAFEKIHSLNGFDTDEAMKQAIINHYQSHLPLMPEQILLSACSNETLKELQEFISHQYSKKIALSIPKKGDKLALIEIAMKNAQEIFSQEKTSNEDRILEEARSLFNLECVPYRVEIFDTSHHSNSQCVGGMVVYENNAFQKDSYRRYHLKGSNEYDQMSELLTRRALDFAKEPPPNLWVIDGGRAQLNIALEILKSSGSFVEVIAISKEKRDSKAYRSKGGAKDIIHTISHTFKLLPSDKRLQWVQKLRDESHRYAINFHRSTKLKNMKQIALLKEKGIGEASVKKLLDYFGSFEAIEKASDQEKNAVLKKRK.

The GIY-YIG domain occupies 13 to 99 (SSSGVYQYFD…IKQLKPKYNI (87 aa)). In terms of domain architecture, UVR spans 205–240 (DRLIKELELKMERLSSNLRFEEALIYRDRIAKIQKI).

The protein belongs to the UvrC family. Interacts with UvrB in an incision complex.

The protein localises to the cytoplasm. Functionally, the UvrABC repair system catalyzes the recognition and processing of DNA lesions. UvrC both incises the 5' and 3' sides of the lesion. The N-terminal half is responsible for the 3' incision and the C-terminal half is responsible for the 5' incision. The sequence is that of UvrABC system protein C from Helicobacter pylori (strain J99 / ATCC 700824) (Campylobacter pylori J99).